Consider the following 773-residue polypeptide: MILDTDYITEDGKPVIRIFKKENGEFKIDYDRNFEPYIYALLKDDSAIEDVKKITAERHGTTVRVVRAEKVKKKFLGRPIEVWKLYFTHPQDVPAIRDKIKEHPAVVDIYEYDIPFAKRYLIDKGLIPMEGDEELKMLAFDIETLYHEGEEFAEGPILMISYADEEGARVITWKNIDLPYVDVVSTEKEMIKRFLKVVKEKDPDVLITYNGDNFDFAYLKKRSEKLGVKFILGREGSEPKIQRMGDRFAVEVKGRIHFDLYPVIRRTINLPTYTLEAVYEAIFGQPKEKVYAEEIAQAWETGEGLERVARYSMEDAKVTYELGKEFFPMEAQLSRLVGQSLWDVSRSSTGNLVEWFLLRKAYERNELAPNKPDERELARRRESYAGGYVKEPERGLWENIVYLDFRSLYPSIIITHNVSPDTLNREGCEEYDVAPQVGHKFCKDFPGFIPSLLGDLLEERQKVKKKMKATIDPIEKKLLDYRQRAIKILANSFYGYYGYAKARWYCKECAESVTAWGRQYIETTIREIEEKFGFKVLYADTDGFFATIPGADAETVKKKAKEFLDYINAKLPGLLELEYEGFYKRGFFVTKKKYAVIDEEDKITTRGLEIVRRDWSEIAKETQARVLEAILKHGDVEEAVRIVKEVTEKLSKYEVPPEKLVIYEQITRDLKDYKATGPHVAVAKRLAARGIKIRPGTVISYIVLKGSGRIGDRAIPFDEFDPAKHKYDAEYYIENQVLPAVERILRAFGYRKEDLRYQKTRQVGLGAWLKPKT.

Disulfide bonds link C428–C442 and C506–C509.

It belongs to the DNA polymerase type-B family.

It catalyses the reaction DNA(n) + a 2'-deoxyribonucleoside 5'-triphosphate = DNA(n+1) + diphosphate. Its function is as follows. In addition to polymerase activity, this DNA polymerase exhibits 3' to 5' exonuclease activity. The sequence is that of DNA polymerase (pol) from Thermococcus gorgonarius.